The following is a 577-amino-acid chain: 9-cis-epoxycarotenoid dioxygenase NCED6, chloroplastic (577 aa).

Positions 1 to 25 are disordered; that stretch reads MQHSLRSDLLPTKTSPRSHLLPQPK. Residues histidine 276, histidine 325, histidine 390, and histidine 563 each contribute to the Fe cation site.

It belongs to the carotenoid oxygenase family. The cofactor is Fe(2+). In terms of tissue distribution, expressed before fertilization in male and female gametophytes, and then immediately after pollination, restricted to seed endosperm.

The protein resides in the plastid. Its subcellular location is the chloroplast stroma. It carries out the reaction a 9-cis-epoxycarotenoid + O2 = a 12'-apo-carotenal + 2-cis,4-trans-xanthoxin. The catalysed reaction is 9-cis-violaxanthin + O2 = (3S,5R,6S)-5,6-epoxy-3-hydroxy-5,6-dihydro-12'-apo-beta-caroten-12'-al + 2-cis,4-trans-xanthoxin. The enzyme catalyses 9'-cis-neoxanthin + O2 = (3S,5R,6R)-3,5-dihydroxy-6,7-didehydro-5,6-dihydro-12'-apo-beta-caroten-12'-al + 2-cis,4-trans-xanthoxin. Its function is as follows. Has a 11,12(11',12') 9-cis epoxycarotenoid cleavage activity. Catalyzes the first step of abscisic-acid biosynthesis from carotenoids. Contributes probably to abscisic acid synthesis for the induction of seed dormancy. The polypeptide is 9-cis-epoxycarotenoid dioxygenase NCED6, chloroplastic (NCED6) (Arabidopsis thaliana (Mouse-ear cress)).